The primary structure comprises 388 residues: Succinate--CoA ligase [ADP-forming] subunit beta (388 aa).

ATP is bound by residues lysine 46, 53-55, glutamate 99, cysteine 102, and glutamate 107; that span reads GRG. Residues asparagine 199 and aspartate 213 each contribute to the Mg(2+) site. Residues asparagine 264 and 321–323 each bind substrate; that span reads GIV.

This sequence belongs to the succinate/malate CoA ligase beta subunit family. Heterotetramer of two alpha and two beta subunits. Mg(2+) is required as a cofactor.

The enzyme catalyses succinate + ATP + CoA = succinyl-CoA + ADP + phosphate. It catalyses the reaction GTP + succinate + CoA = succinyl-CoA + GDP + phosphate. It functions in the pathway carbohydrate metabolism; tricarboxylic acid cycle; succinate from succinyl-CoA (ligase route): step 1/1. Succinyl-CoA synthetase functions in the citric acid cycle (TCA), coupling the hydrolysis of succinyl-CoA to the synthesis of either ATP or GTP and thus represents the only step of substrate-level phosphorylation in the TCA. The beta subunit provides nucleotide specificity of the enzyme and binds the substrate succinate, while the binding sites for coenzyme A and phosphate are found in the alpha subunit. The sequence is that of Succinate--CoA ligase [ADP-forming] subunit beta from Actinobacillus pleuropneumoniae serotype 3 (strain JL03).